The chain runs to 296 residues: ATP phosphoribosyltransferase (296 aa).

The protein belongs to the ATP phosphoribosyltransferase family.

It is found in the cytoplasm. It catalyses the reaction 1-(5-phospho-beta-D-ribosyl)-ATP + diphosphate = 5-phospho-alpha-D-ribose 1-diphosphate + ATP. The protein operates within amino-acid biosynthesis; L-histidine biosynthesis; L-histidine from 5-phospho-alpha-D-ribose 1-diphosphate: step 1/9. In terms of biological role, catalyzes the condensation of ATP and 5-phosphoribose 1-diphosphate to form N'-(5'-phosphoribosyl)-ATP (PR-ATP). Has a crucial role in the pathway because the rate of histidine biosynthesis seems to be controlled primarily by regulation of the enzymatic activity. The sequence is that of ATP phosphoribosyltransferase (HIS1) from Yarrowia lipolytica (strain CLIB 122 / E 150) (Yeast).